The sequence spans 389 residues: Dirigent protein 25 (389 aa).

The N-terminal stretch at 1-21 (MAGCKVLFFLILALAITFVSA) is a signal peptide. Low complexity-rich tracts occupy residues 50–68 (GPFPTANSGPATGIASGTG), 77–86 (LGTNTGPGPL), and 98–135 (SSGTLPVTGPGPLPTSSGLLPGASSGNLPGSGSGPLPT). The interval 50–135 (GPFPTANSGP…PGSGSGPLPT (86 aa)) is disordered.

Belongs to the plant dirigent protein family. In terms of assembly, homodimer.

It is found in the secreted. Its subcellular location is the extracellular space. The protein localises to the apoplast. Its function is as follows. Dirigent proteins impart stereoselectivity on the phenoxy radical-coupling reaction, yielding optically active lignans from two molecules of coniferyl alcohol in the biosynthesis of lignans, flavonolignans, and alkaloids and thus plays a central role in plant secondary metabolism. The chain is Dirigent protein 25 (DIR25) from Arabidopsis thaliana (Mouse-ear cress).